The following is a 657-amino-acid chain: PAN2-PAN3 deadenylation complex subunit PAN3 (657 aa).

Disordered regions lie at residues 1 to 29, 52 to 98, and 115 to 135; these read MASA…HAKD, HDPS…SATI, and SRSN…EWSI. The C3H1-type zinc-finger motif lies at 27 to 55; it reads AKDTLCRNVTIYGRCRYEDKGCVFNHDPS. The span at 52–67 shows a compositional bias: basic and acidic residues; that stretch reads HDPSRVNDAQHPERSS. 2 stretches are compositionally biased toward polar residues: residues 75 to 98 and 115 to 132; these read DSPS…SATI and SRSN…STPE. A pseudokinase domain region spans residues 259-521; that stretch reads QTLPNSQLPT…TIDIFISGIS (263 aa). ATP-binding positions include arginine 311, 360-367, and 421-422; these read DYHPLSKT and SK. A coiled-coil region spans residues 522–560; it reads SQLMSTFDSSLHLDDQLISDLSRELENARLVRLLTKLNF. A knob domain region spans residues 561-657; sequence INERPEYEHD…QALLKPARRI (97 aa).

It belongs to the protein kinase superfamily. PAN3 family. As to quaternary structure, homodimer. Forms a heterotrimer with a catalytic subunit PAN2 to form the poly(A)-nuclease (PAN) deadenylation complex. Interacts (via PAM-2 motif) with poly(A)-binding protein PAB1 (via PABC domain), conferring substrate specificity of the enzyme complex.

The protein resides in the cytoplasm. In terms of biological role, regulatory subunit of the poly(A)-nuclease (PAN) deadenylation complex, one of two cytoplasmic mRNA deadenylases involved in mRNA turnover. PAN specifically shortens poly(A) tails of RNA and the activity is stimulated by poly(A)-binding protein PAB1. PAN deadenylation is followed by rapid degradation of the shortened mRNA tails by the CCR4-NOT complex. Deadenylated mRNAs are then degraded by two alternative mechanisms, namely exosome-mediated 3'-5' exonucleolytic degradation, or deadenylation-dependent mRNA decaping and subsequent 5'-3' exonucleolytic degradation by XRN1. May also be involved in post-transcriptional maturation of mRNA poly(A) tails. PAN3 acts as a positive regulator for PAN activity, recruiting the catalytic subunit PAN2 to mRNA via its interaction with RNA and with PAB1. In Coccidioides immitis (strain RS) (Valley fever fungus), this protein is PAN2-PAN3 deadenylation complex subunit PAN3.